Reading from the N-terminus, the 4903-residue chain is Histone-lysine N-methyltransferase 2C (4903 aa).

Disordered stretches follow at residues 1–116 (MSSE…SEES) and 159–202 (LTLP…PPQQ). A compositionally biased stretch (pro residues) spans 13-28 (QPPPAPPEEPGAPAPS). Phosphoserine occurs at positions 28 and 46. A DNA-binding region (a.T hook) is located at residues 34–46 (KRPRGRPRKDGAS). Over residues 50 to 59 (RARKKPRSRG) the composition is skewed to basic residues. Residues 64–81 (EDEDSMDGLETTETENIV) are compositionally biased toward acidic residues. Phosphoserine is present on residues Ser89 and Ser113. The span at 101–116 (SKQPVSALQRSVSEES) shows a compositional bias: polar residues. Residues 226–261 (ELSLVGLPDAIDVQALFDSTGTCWAHHRCVEWSLGI) form a C2HC pre-PHD-type 1; degenerate zinc finger. PHD-type zinc fingers lie at residues 282–330 (ERCA…PEHI), 340–390 (DANC…CKVC), 387–437 (CKVC…CRIC), and 463–519 (DNLC…CKHL). Residues 343-388 (CAVCDSPGDLLDQFFCTTCGQHYHGMCLDIAVTPLKRAGWQCPECK) form an RING-type zinc finger. The 54-residue stretch at 435 to 488 (RICIECGTRSSTQWHHNCLICDTCYQQQDNLCPFCGKCYHPELQKDMLHCNMCK) folds into the DHHC domain. Residues 671-703 (SEVASKELSPPKSAPETAAPEALLSPHSERSLS) form a disordered region. Position 751 is an N6-acetyllysine (Lys751). Basic residues predominate over residues 824 to 835 (TKRKFSPGRPRS). Disordered stretches follow at residues 824–857 (TKRKFSPGRPRSKQGAWSNHNTVSPPSWAPDTSE) and 882–904 (GFPGKRRPRGAGLSGRGGRGRSK). The span at 838–848 (GAWSNHNTVSP) shows a compositional bias: polar residues. Ser847 carries the phosphoserine modification. PHD-type zinc fingers lie at residues 950–1003 (QDMC…CTVC), 1000–1050 (CTVC…CVWC), and 1077–1132 (LSSC…CRPY). The disordered stretch occupies residues 1208–1318 (AVLQTPPDIQ…PSRDDGWREQ (111 aa)). The span at 1217 to 1263 (QSEHSRDGEMDDSREGELMDCDGKSESSPEREAGDDETKGIEGTDAI) shows a compositional bias: basic and acidic residues. Position 1294 is a phosphoserine (Ser1294). Basic and acidic residues predominate over residues 1309 to 1318 (PSRDDGWREQ). A coiled-coil region spans residues 1330–1352 (VAENTDKIKKRYRKRKNKLEETF). Disordered stretches follow at residues 1397-1419 (SDPLLSSSSTSAKPGTQGTADDP) and 1447-1473 (HSDIGPTTADASSLPQPGVSQSSRPLT). Polar residues-rich tracts occupy residues 1406–1415 (TSAKPGTQGT) and 1455–1471 (ADASSLPQPGVSQSSRP). Lys1497 bears the N6-acetyllysine mark. Disordered stretches follow at residues 1594-1617 (NAIASDPNSSWAPTTPSMEGENDT) and 1698-1757 (VQMS…AKIE). Over residues 1599-1617 (DPNSSWAPTTPSMEGENDT) the composition is skewed to polar residues. Over residues 1707 to 1717 (RQQQQDSIDPS) the composition is skewed to low complexity. A compositionally biased stretch (basic and acidic residues) spans 1718–1742 (SRIDSDLFKDPLKQRESEHEQEWKF). A coiled-coil region spans residues 1743–1790 (RQQMRQKSKQQAKIEATQKLEQVKNEQQQQQQQQQQQQQQQLASQHLL). N6-acetyllysine is present on Lys1761. The disordered stretch occupies residues 1791–2375 (VAPGSDTPSS…MSQADTEKLR (585 aa)). Residues 1796–1819 (DTPSSGAQSPLTPQAGNGNVSPAQ) show a composition bias toward polar residues. Positions 1855–1886 (PSRIPVQESLSQSQNSQPPSPQMFSPGSSHSR) are enriched in low complexity. Ser1983 carries the phosphoserine modification. Polar residues predominate over residues 1986–2001 (ISEQSTKGPLTTGTSD). At Lys2005 the chain carries N6-acetyllysine. 3 stretches are compositionally biased toward polar residues: residues 2113–2124 (GTISRSASQDPY), 2137–2151 (SYSQTSGTARSNPDP), and 2325–2334 (GNFSTSSNLP). Residues 2335 to 2347 (VSSQGQQFSSVSQ) show a composition bias toward low complexity. The segment covering 2355-2369 (SGGTDTQNTVNMSQA) has biased composition (polar residues). 2 positions are modified to asymmetric dimethylarginine: Arg2447 and Arg2563. 3 disordered regions span residues 2561-2668 (RSRL…DNLE), 2702-2736 (KDLDDEDLENLNLDTEDGKGDDLDTLDNLETNDPN), and 2786-2844 (VEPK…GDAD). 3 stretches are compositionally biased toward polar residues: residues 2602–2611 (QPSQCLSNQL), 2621–2636 (PPSQQEQGHPAHQSSI), and 2653–2668 (PLSTSTPAETSPDNLE). Over residues 2788–2807 (PKTRDQGDKTMVLEDKDLPQ) the composition is skewed to basic and acidic residues. 2 positions are modified to N6-acetyllysine: Lys2796 and Lys2803. Ser2822 carries the phosphoserine modification. Residue Tyr2824 is modified to Phosphotyrosine. Residues 2825–2843 (SKEEIQSEIKNHDDSRGDA) show a composition bias toward basic and acidic residues. Residues Lys2826 and Lys2862 each carry the N6-acetyllysine modification. Positions 2920 to 2953 (EKCDDSDIRPSGSSPPSLPISPSTHGSSLPPTLI) are disordered. Positions 2929–2942 (PSGSSPPSLPISPS) are enriched in low complexity. Coiled-coil stretches lie at residues 3047-3074 (LLQDLLDQERQEQQQQRQMQAMIRQRSE) and 3166-3193 (NDSQRKQYEEWLQETQQLLQMQQKYLEE). Basic residues predominate over residues 3198 to 3214 (HRKSKKALSAKQRTAKK). The interval 3198 to 3223 (HRKSKKALSAKQRTAKKAGREFPEED) is disordered. 2 coiled-coil regions span residues 3224–3270 (AEQL…QQCA) and 3387–3432 (FSES…QHCL). Disordered stretches follow at residues 3329–3407 (PGWQ…QERQ) and 3444–3910 (SQMP…QKMA). Over residues 3391-3407 (FQERERKERLREQQERQ) the composition is skewed to basic and acidic residues. The span at 3464-3485 (LQQSPQHQQQIGPVLQQQNVQQ) shows a compositional bias: low complexity. Composition is skewed to polar residues over residues 3486 to 3503 (GSVNSPPNQTFMQTNEQR), 3515 to 3524 (PSASGGSPNF), 3557 to 3586 (PVANSNVPCGQDPAVTQGQNYSGSSQSLIQ), and 3632 to 3647 (LSETTSTPAVSSPSEL). 2 stretches are compositionally biased toward basic and acidic residues: residues 3697-3739 (AEAD…KIKD) and 3795-3804 (SSTKDGKLIE). Residue Lys3709 is modified to N6-acetyllysine. The span at 3871–3885 (MYSSSDSFTHLKQQN) shows a compositional bias: polar residues. A compositionally biased stretch (pro residues) spans 3890-3904 (PPTPPASLPPTPPPM). At Ser4027 the chain carries Phosphoserine. At Arg4132 the chain carries Asymmetric dimethylarginine. The disordered stretch occupies residues 4159–4184 (PNVPFPPTSNGLSGYKDSSHGPAEGA). Ser4260 is subject to Phosphoserine. The C2HC pre-PHD-type 2 zinc finger occupies 4391-4431 (CRKCCFCHEEGDGLTDGPARLLNLDLDLWVHLNCALWSTEV). The segment at 4452–4499 (MKCVFCHKTGATSGCHRFRCTNIYHFTCATKAQCMFFKDKTMLCPMHK) adopts a PHD-type 8 zinc-finger fold. Residues 4537 to 4597 (DHTFRVGSLI…CRYLCSIEEK (61 aa)) enclose the FYR N-terminal domain. The FYR C-terminal domain occupies 4598-4683 (DGRPVFVIRI…EACENYTFRY (86 aa)). The WDR5 interaction motif (WIN) signature appears at 4699 to 4704 (GCARSE). Positions 4763 to 4879 (SNVYLARSRI…KGEELCYDYK (117 aa)) constitute an SET domain. Residues Tyr4817 and 4840–4841 (NH) each bind S-adenosyl-L-methionine. 4 residues coordinate Zn(2+): Cys4843, Cys4891, Cys4893, and Cys4898. Positions 4887-4903 (HKIPCHCGAVNCRKWMN) constitute a Post-SET domain.

The protein belongs to the class V-like SAM-binding methyltransferase superfamily. Histone-lysine methyltransferase family. TRX/MLL subfamily. In terms of assembly, component of the MLL3 complex (also named ASCOM complex), at least composed of catalytic subunit KMT2C/MLL3, ASH2L, RBBP5, WDR5, NCOA6, DPY30, KDM6A, PAXIP1/PTIP, PAGR1 and alpha- and beta-tubulin. Forms a core complex with the evolutionary conserved subcomplex WRAD composed of WDR5, RBBP5, ASH2L/ASH2 and DPY30 subunits; WRAD differentially stimulates the methyltransferase activity. Interacts (via WIN motif) with WDR5. In terms of tissue distribution, in adult, detected in testis, kidney, spleen and lung, weakly expressed in brain and absent in heart and liver. First detected throughout the embryo at 8 dpc when expression is strong in forebrain neuroepithelium and absent in heart. Expressed in the eye lens between 10 and 14.5 dpc. By 13 dpc, expressed strongly in spinal cord, hand/foot plates and gonads.

Its subcellular location is the nucleus. It catalyses the reaction L-lysyl(4)-[histone H3] + S-adenosyl-L-methionine = N(6)-methyl-L-lysyl(4)-[histone H3] + S-adenosyl-L-homocysteine + H(+). Histone methyltransferase that catalyzes methyl group transfer from S-adenosyl-L-methionine to the epsilon-amino group of 'Lys-4' of histone H3 (H3K4). Part of chromatin remodeling machinery predominantly forms H3K4me1 methylation marks at active chromatin sites where transcription and DNA repair take place. Likely plays a redundant role with KMT2D in enriching H3K4me1 mark on primed and active enhancer elements. The protein is Histone-lysine N-methyltransferase 2C (Kmt2c) of Mus musculus (Mouse).